We begin with the raw amino-acid sequence, 432 residues long: D-amino acid dehydrogenase (432 aa).

3–17 (VLVLGSGVIGTTTAY) lines the FAD pocket.

This sequence belongs to the DadA oxidoreductase family. It depends on FAD as a cofactor.

It carries out the reaction a D-alpha-amino acid + A + H2O = a 2-oxocarboxylate + AH2 + NH4(+). It participates in amino-acid degradation; D-alanine degradation; NH(3) and pyruvate from D-alanine: step 1/1. Its function is as follows. Oxidative deamination of D-amino acids. In Azotobacter vinelandii (strain DJ / ATCC BAA-1303), this protein is D-amino acid dehydrogenase.